A 75-amino-acid chain; its full sequence is Translational regulator CsrA (75 aa).

Belongs to the CsrA/RsmA family. As to quaternary structure, homodimer; the beta-strands of each monomer intercalate to form a hydrophobic core, while the alpha-helices form wings that extend away from the core.

The protein localises to the cytoplasm. A translational regulator that binds mRNA to regulate translation initiation and/or mRNA stability. Usually binds in the 5'-UTR at or near the Shine-Dalgarno sequence preventing ribosome-binding, thus repressing translation. Its main target seems to be the major flagellin gene, while its function is anatagonized by FliW. This Exiguobacterium sibiricum (strain DSM 17290 / CCUG 55495 / CIP 109462 / JCM 13490 / 255-15) protein is Translational regulator CsrA.